Consider the following 145-residue polypeptide: Ribosomal RNA large subunit methyltransferase H (145 aa).

S-adenosyl-L-methionine-binding positions include Leu-64, Gly-93, and 112–117 (LSALTF).

The protein belongs to the RNA methyltransferase RlmH family. In terms of assembly, homodimer.

The protein resides in the cytoplasm. The catalysed reaction is pseudouridine(1915) in 23S rRNA + S-adenosyl-L-methionine = N(3)-methylpseudouridine(1915) in 23S rRNA + S-adenosyl-L-homocysteine + H(+). In terms of biological role, specifically methylates the pseudouridine at position 1915 (m3Psi1915) in 23S rRNA. The chain is Ribosomal RNA large subunit methyltransferase H from Prochlorococcus marinus (strain SARG / CCMP1375 / SS120).